A 166-amino-acid polypeptide reads, in one-letter code: Large ribosomal subunit protein uL10 (166 aa).

It belongs to the universal ribosomal protein uL10 family. Part of the ribosomal stalk of the 50S ribosomal subunit. The N-terminus interacts with L11 and the large rRNA to form the base of the stalk. The C-terminus forms an elongated spine to which L12 dimers bind in a sequential fashion forming a multimeric L10(L12)X complex.

In terms of biological role, forms part of the ribosomal stalk, playing a central role in the interaction of the ribosome with GTP-bound translation factors. This is Large ribosomal subunit protein uL10 from Azotobacter vinelandii (strain DJ / ATCC BAA-1303).